The following is a 160-amino-acid chain: Oocyte-secreted protein 4B (160 aa).

A signal peptide spans Met-1–Cys-13.

This sequence belongs to the PLAC1 family.

It is found in the secreted. The sequence is that of Oocyte-secreted protein 4B from Homo sapiens (Human).